We begin with the raw amino-acid sequence, 361 residues long: Chorismate synthase (361 aa).

The NADP(+) site is built by arginine 48 and arginine 54. Residues 125–127 (RSS), 238–239 (NA), glycine 278, 293–297 (KPTSS), and arginine 319 contribute to the FMN site.

Belongs to the chorismate synthase family. Homotetramer. It depends on FMNH2 as a cofactor.

It catalyses the reaction 5-O-(1-carboxyvinyl)-3-phosphoshikimate = chorismate + phosphate. It participates in metabolic intermediate biosynthesis; chorismate biosynthesis; chorismate from D-erythrose 4-phosphate and phosphoenolpyruvate: step 7/7. In terms of biological role, catalyzes the anti-1,4-elimination of the C-3 phosphate and the C-6 proR hydrogen from 5-enolpyruvylshikimate-3-phosphate (EPSP) to yield chorismate, which is the branch point compound that serves as the starting substrate for the three terminal pathways of aromatic amino acid biosynthesis. This reaction introduces a second double bond into the aromatic ring system. The protein is Chorismate synthase of Escherichia coli O1:K1 / APEC.